Reading from the N-terminus, the 143-residue chain is Large ribosomal subunit protein uL16 (143 aa).

Over residues 1–14 the composition is skewed to basic residues; sequence MLTPKRVKWRRQHR. Residues 1–23 are disordered; sequence MLTPKRVKWRRQHRPDRAGKAKG.

Belongs to the universal ribosomal protein uL16 family. Part of the 50S ribosomal subunit.

Functionally, binds 23S rRNA and is also seen to make contacts with the A and possibly P site tRNAs. The chain is Large ribosomal subunit protein uL16 from Desulforudis audaxviator (strain MP104C).